The primary structure comprises 564 residues: Dihydroxy-acid dehydratase (564 aa).

[2Fe-2S] cluster is bound at residue Cys51. Mg(2+) is bound at residue Asp83. Cys124 contacts [2Fe-2S] cluster. Positions 125 and 126 each coordinate Mg(2+). Lys126 carries the N6-carboxylysine modification. Residue Cys196 coordinates [2Fe-2S] cluster. Residue Glu448 participates in Mg(2+) binding. Ser474 acts as the Proton acceptor in catalysis.

The protein belongs to the IlvD/Edd family. As to quaternary structure, homodimer. The cofactor is [2Fe-2S] cluster. Mg(2+) is required as a cofactor.

The catalysed reaction is (2R)-2,3-dihydroxy-3-methylbutanoate = 3-methyl-2-oxobutanoate + H2O. The enzyme catalyses (2R,3R)-2,3-dihydroxy-3-methylpentanoate = (S)-3-methyl-2-oxopentanoate + H2O. It functions in the pathway amino-acid biosynthesis; L-isoleucine biosynthesis; L-isoleucine from 2-oxobutanoate: step 3/4. Its pathway is amino-acid biosynthesis; L-valine biosynthesis; L-valine from pyruvate: step 3/4. In terms of biological role, functions in the biosynthesis of branched-chain amino acids. Catalyzes the dehydration of (2R,3R)-2,3-dihydroxy-3-methylpentanoate (2,3-dihydroxy-3-methylvalerate) into 2-oxo-3-methylpentanoate (2-oxo-3-methylvalerate) and of (2R)-2,3-dihydroxy-3-methylbutanoate (2,3-dihydroxyisovalerate) into 2-oxo-3-methylbutanoate (2-oxoisovalerate), the penultimate precursor to L-isoleucine and L-valine, respectively. This chain is Dihydroxy-acid dehydratase, found in Pyrobaculum calidifontis (strain DSM 21063 / JCM 11548 / VA1).